The chain runs to 392 residues: Sterol methyltransferase-like 3 (392 aa).

Residues Val-20–Ser-42 form a helical membrane-spanning segment.

The protein belongs to the class I-like SAM-binding methyltransferase superfamily. Erg6/SMT family.

It is found in the microsome membrane. Functionally, unable to convert squalene, botryococcene, cycloartenol, zymosterol or lanosterol to mono-, di-, tri- or tetramethylated derivatives. The polypeptide is Sterol methyltransferase-like 3 (SMT-3) (Botryococcus braunii (Green alga)).